The sequence spans 306 residues: Ornithine carbamoyltransferase (306 aa).

Residues 50-53, Gln77, Arg101, and 128-131 each bind carbamoyl phosphate; these read STRT and HPCQ. L-ornithine-binding positions include Asn160, Asp224, and 228–229; that span reads SM. Residues 264 to 265 and Arg292 contribute to the carbamoyl phosphate site; that span reads CL.

The protein belongs to the aspartate/ornithine carbamoyltransferase superfamily. OTCase family.

The protein resides in the cytoplasm. It carries out the reaction carbamoyl phosphate + L-ornithine = L-citrulline + phosphate + H(+). Its pathway is amino-acid biosynthesis; L-arginine biosynthesis; L-arginine from L-ornithine and carbamoyl phosphate: step 1/3. Its function is as follows. Reversibly catalyzes the transfer of the carbamoyl group from carbamoyl phosphate (CP) to the N(epsilon) atom of ornithine (ORN) to produce L-citrulline. The protein is Ornithine carbamoyltransferase of Mycobacterium leprae (strain TN).